Reading from the N-terminus, the 259-residue chain is Imidazole glycerol phosphate synthase subunit HisF (259 aa).

Catalysis depends on residues Asp11 and Asp130.

It belongs to the HisA/HisF family. In terms of assembly, heterodimer of HisH and HisF.

It localises to the cytoplasm. The catalysed reaction is 5-[(5-phospho-1-deoxy-D-ribulos-1-ylimino)methylamino]-1-(5-phospho-beta-D-ribosyl)imidazole-4-carboxamide + L-glutamine = D-erythro-1-(imidazol-4-yl)glycerol 3-phosphate + 5-amino-1-(5-phospho-beta-D-ribosyl)imidazole-4-carboxamide + L-glutamate + H(+). Its pathway is amino-acid biosynthesis; L-histidine biosynthesis; L-histidine from 5-phospho-alpha-D-ribose 1-diphosphate: step 5/9. IGPS catalyzes the conversion of PRFAR and glutamine to IGP, AICAR and glutamate. The HisF subunit catalyzes the cyclization activity that produces IGP and AICAR from PRFAR using the ammonia provided by the HisH subunit. This chain is Imidazole glycerol phosphate synthase subunit HisF, found in Chloroflexus aurantiacus (strain ATCC 29366 / DSM 635 / J-10-fl).